Consider the following 338-residue polypeptide: Ketol-acid reductoisomerase (NADP(+)) (338 aa).

In terms of domain architecture, KARI N-terminal Rossmann spans 1–181 (MKVYYDKDCD…GGGRTGIIET (181 aa)). NADP(+) is bound by residues 24-27 (YGSQ), Arg-47, Ser-50, Thr-52, and 82-85 (DEFQ). His-107 is an active-site residue. NADP(+) is bound at residue Gly-133. In terms of domain architecture, KARI C-terminal knotted spans 182–327 (TFKDETETDL…EQLRAMMPWI (146 aa)). Residues Asp-190, Glu-194, Glu-226, and Glu-230 each contribute to the Mg(2+) site. Ser-251 is a binding site for substrate.

The protein belongs to the ketol-acid reductoisomerase family. The cofactor is Mg(2+).

The enzyme catalyses (2R)-2,3-dihydroxy-3-methylbutanoate + NADP(+) = (2S)-2-acetolactate + NADPH + H(+). It carries out the reaction (2R,3R)-2,3-dihydroxy-3-methylpentanoate + NADP(+) = (S)-2-ethyl-2-hydroxy-3-oxobutanoate + NADPH + H(+). Its pathway is amino-acid biosynthesis; L-isoleucine biosynthesis; L-isoleucine from 2-oxobutanoate: step 2/4. The protein operates within amino-acid biosynthesis; L-valine biosynthesis; L-valine from pyruvate: step 2/4. Functionally, involved in the biosynthesis of branched-chain amino acids (BCAA). Catalyzes an alkyl-migration followed by a ketol-acid reduction of (S)-2-acetolactate (S2AL) to yield (R)-2,3-dihydroxy-isovalerate. In the isomerase reaction, S2AL is rearranged via a Mg-dependent methyl migration to produce 3-hydroxy-3-methyl-2-ketobutyrate (HMKB). In the reductase reaction, this 2-ketoacid undergoes a metal-dependent reduction by NADPH to yield (R)-2,3-dihydroxy-isovalerate. The polypeptide is Ketol-acid reductoisomerase (NADP(+)) (Ectopseudomonas mendocina (strain ymp) (Pseudomonas mendocina)).